Consider the following 255-residue polypeptide: Glutamate racemase (255 aa).

Residues 7–8 (DS) and 39–40 (YG) contribute to the substrate site. Cysteine 70 serves as the catalytic Proton donor/acceptor. Residue 71 to 72 (NT) coordinates substrate. Cysteine 181 (proton donor/acceptor) is an active-site residue. 182 to 183 (TH) serves as a coordination point for substrate.

It belongs to the aspartate/glutamate racemases family.

The catalysed reaction is L-glutamate = D-glutamate. Its pathway is cell wall biogenesis; peptidoglycan biosynthesis. Its function is as follows. Provides the (R)-glutamate required for cell wall biosynthesis. This Helicobacter pylori (strain ATCC 700392 / 26695) (Campylobacter pylori) protein is Glutamate racemase.